A 92-amino-acid polypeptide reads, in one-letter code: Small ribosomal subunit protein uS19c (92 aa).

It belongs to the universal ribosomal protein uS19 family.

It is found in the plastid. The protein localises to the chloroplast. Protein S19 forms a complex with S13 that binds strongly to the 16S ribosomal RNA. The chain is Small ribosomal subunit protein uS19c (rps19) from Guillardia theta (Cryptophyte).